Reading from the N-terminus, the 199-residue chain is FMN-dependent NADH:quinone oxidoreductase (199 aa).

FMN-binding positions include Ser10, 16-18, and 96-99; these read SVS and MYNF.

Belongs to the azoreductase type 1 family. In terms of assembly, homodimer. It depends on FMN as a cofactor.

It carries out the reaction 2 a quinone + NADH + H(+) = 2 a 1,4-benzosemiquinone + NAD(+). It catalyses the reaction N,N-dimethyl-1,4-phenylenediamine + anthranilate + 2 NAD(+) = 2-(4-dimethylaminophenyl)diazenylbenzoate + 2 NADH + 2 H(+). Quinone reductase that provides resistance to thiol-specific stress caused by electrophilic quinones. In terms of biological role, also exhibits azoreductase activity. Catalyzes the reductive cleavage of the azo bond in aromatic azo compounds to the corresponding amines. The polypeptide is FMN-dependent NADH:quinone oxidoreductase (Azotobacter vinelandii (strain DJ / ATCC BAA-1303)).